We begin with the raw amino-acid sequence, 140 residues long: uncharacterized protein (140 aa).

Transmembrane regions (helical) follow at residues 4-21 (ILKF…YLFG) and 26-48 (LVKV…SGYL).

Belongs to the bacteriophage holin family. Cp-1 holin subfamily.

It is found in the cell membrane. This is an uncharacterized protein from Listeria monocytogenes serovar 1/2a (strain ATCC BAA-679 / EGD-e).